Reading from the N-terminus, the 640-residue chain is UvrABC system protein C (640 aa).

The region spanning 35–113 (DAPGVYRMIG…IKQLKPRFNV (79 aa)) is the GIY-YIG domain. Residues 223-258 (RAVMATMAKAMEEAAEELEFERAARLRDRIRALSAV) enclose the UVR domain.

It belongs to the UvrC family. Interacts with UvrB in an incision complex.

It localises to the cytoplasm. The UvrABC repair system catalyzes the recognition and processing of DNA lesions. UvrC both incises the 5' and 3' sides of the lesion. The N-terminal half is responsible for the 3' incision and the C-terminal half is responsible for the 5' incision. The polypeptide is UvrABC system protein C (Caulobacter vibrioides (strain ATCC 19089 / CIP 103742 / CB 15) (Caulobacter crescentus)).